A 358-amino-acid polypeptide reads, in one-letter code: Putative cell-type specific agglutination protein pfl7 (358 aa).

A signal peptide spans 1 to 23 (MNSLKSLCLKCIVTLCLLVNAFA). Residues asparagine 67, asparagine 88, asparagine 112, and asparagine 136 are each glycosylated (N-linked (GlcNAc...) asparagine). Residues 90-144 (TISTSSSTPITASVPTSSSILSNSTIPTTSPVPTTSSTPTSSSILSNSTIPSSSS) form a disordered region. 2 consecutive repeat copies span residues 148-180 (STITTTIISGSTQFTTTFVDQSIDTVEVVIPTA) and 181-218 (GYITTTLTSGSSYPVSTTTLQTVSGTQSGLVEVITPSC). The tract at residues 148 to 218 (STITTTIISG…GLVEVITPSC (71 aa)) is 2 X 36 AA approximate tandem repeats. A DIPSY domain is found at 207-358 (QSGLVEVITP…RADDVILVAY (152 aa)). Residues asparagine 245 and asparagine 305 are each glycosylated (N-linked (GlcNAc...) asparagine).

Belongs to the mam3/map4 family.

It is found in the cell surface. May be involved in agglutination during conjugation or other aspects of colony formation. Induces flocculation when overexpressed. This Schizosaccharomyces pombe (strain 972 / ATCC 24843) (Fission yeast) protein is Putative cell-type specific agglutination protein pfl7.